Reading from the N-terminus, the 127-residue chain is I-Kappa-B like protein J1 (127 aa).

ANK repeat units lie at residues 43–76 and 81–111; these read HGNTCLHIATEEHRGRQAIWLIEKLVEYGADLDE and DGDTVLHMAVKKGDYKLATWMCQQLSMRFGS.

Belongs to the polydnaviridae I-Kappa-B-like protein family.

In terms of biological role, suppresses the host immune response through NF-kappa-B inactivation. Possesses ankyrin repeat domains required for NF-kappa-B binding but lacks the regulatory regions required for dissociation from NF-kappa-B and degradation. Therefore, prevents host NF-kappa-B release and subsequent activation. This Microplitis demolitor (Parasitoid wasp) protein is I-Kappa-B like protein J1 (J2).